Here is a 130-residue protein sequence, read N- to C-terminus: MIGNYNYGTGRRKSAVARVFIKSGSGQIVVNGKPANEYFSRETGLMVIRQPLELTNNVETFDIMVNVNGGGESGQAGAVRHGITRALIDYDATLKPELSKAGFVTRDAREVERKKVGLRKARRAKQFSKR.

The protein belongs to the universal ribosomal protein uS9 family.

The sequence is that of Small ribosomal subunit protein uS9 from Herminiimonas arsenicoxydans.